The primary structure comprises 130 residues: MSMQDPLADMLTRIRNAQMAEKTVVSMPSSKLKAAVAKVLKDEGYIADFQISSEVKPQLSIELKYFEGKPVIEEVKRISRPGLRQYKSVEQLPKVRGGLGVSIVSTNKGVMTDRAARAAGVGGEVLCTVF.

This sequence belongs to the universal ribosomal protein uS8 family. Part of the 30S ribosomal subunit. Contacts proteins S5 and S12.

In terms of biological role, one of the primary rRNA binding proteins, it binds directly to 16S rRNA central domain where it helps coordinate assembly of the platform of the 30S subunit. In Pseudomonas aeruginosa (strain UCBPP-PA14), this protein is Small ribosomal subunit protein uS8.